Here is a 176-residue protein sequence, read N- to C-terminus: MDLPGPIHDFLLVFLGSGLLVGGLGVVLLPNPIFSAFSLGFVLVCISLLYILSNSHFVAAAQLLIYVGAINVLIIFAVMFMNDSEYSTDSNLWTVGNGITSLVCTTILFSLMSTILDTSWYGVIWTTRLNQILEQDLISNSQQIGIHLSTDFFLPFELISIILLVALIGAISVARQ.

A run of 5 helical transmembrane segments spans residues 10–30, 32–52, 61–81, 92–112, and 152–172; these read FLLV…VLLP, PIFS…LYIL, AQLL…VMFM, LWTV…FSLM, and FFLP…GAIS.

This sequence belongs to the complex I subunit 6 family. NDH is composed of at least 16 different subunits, 5 of which are encoded in the nucleus.

It is found in the plastid. The protein localises to the chloroplast thylakoid membrane. The enzyme catalyses a plastoquinone + NADH + (n+1) H(+)(in) = a plastoquinol + NAD(+) + n H(+)(out). It catalyses the reaction a plastoquinone + NADPH + (n+1) H(+)(in) = a plastoquinol + NADP(+) + n H(+)(out). NDH shuttles electrons from NAD(P)H:plastoquinone, via FMN and iron-sulfur (Fe-S) centers, to quinones in the photosynthetic chain and possibly in a chloroplast respiratory chain. The immediate electron acceptor for the enzyme in this species is believed to be plastoquinone. Couples the redox reaction to proton translocation, and thus conserves the redox energy in a proton gradient. This is NAD(P)H-quinone oxidoreductase subunit 6, chloroplastic (ndhG) from Nasturtium officinale (Watercress).